Consider the following 545-residue polypeptide: CTP synthase (545 aa).

Residues 1–266 form an amidoligase domain region; sequence MATNYIFVTG…DDFVCERFRL (266 aa). Ser14 contributes to the CTP binding site. Residue Ser14 coordinates UTP. ATP contacts are provided by residues 15–20 and Asp72; that span reads SLGKGI. Residues Asp72 and Glu140 each coordinate Mg(2+). Residues 147 to 149, 187 to 192, and Lys223 contribute to the CTP site; these read DIE and KTKPTQ. UTP is bound by residues 187–192 and Lys223; that span reads KTKPTQ. 239–241 is an ATP binding site; it reads KDV. The region spanning 291–542 is the Glutamine amidotransferase type-1 domain; sequence TIGMVGKYTE…VKAAYENHKK (252 aa). Residue Gly352 coordinates L-glutamine. The active-site Nucleophile; for glutamine hydrolysis is the Cys379. L-glutamine contacts are provided by residues 380–383, Glu403, and Arg470; that span reads LGMQ. Catalysis depends on residues His515 and Glu517.

This sequence belongs to the CTP synthase family. In terms of assembly, homotetramer.

The enzyme catalyses UTP + L-glutamine + ATP + H2O = CTP + L-glutamate + ADP + phosphate + 2 H(+). It carries out the reaction L-glutamine + H2O = L-glutamate + NH4(+). It catalyses the reaction UTP + NH4(+) + ATP = CTP + ADP + phosphate + 2 H(+). It participates in pyrimidine metabolism; CTP biosynthesis via de novo pathway; CTP from UDP: step 2/2. With respect to regulation, allosterically activated by GTP, when glutamine is the substrate; GTP has no effect on the reaction when ammonia is the substrate. The allosteric effector GTP functions by stabilizing the protein conformation that binds the tetrahedral intermediate(s) formed during glutamine hydrolysis. Inhibited by the product CTP, via allosteric rather than competitive inhibition. Catalyzes the ATP-dependent amination of UTP to CTP with either L-glutamine or ammonia as the source of nitrogen. Regulates intracellular CTP levels through interactions with the four ribonucleotide triphosphates. This chain is CTP synthase, found in Haemophilus influenzae (strain ATCC 51907 / DSM 11121 / KW20 / Rd).